Reading from the N-terminus, the 338-residue chain is Tagatose 1,6-diphosphate aldolase (338 aa).

This sequence belongs to the aldolase LacD family.

The enzyme catalyses D-tagatofuranose 1,6-bisphosphate = D-glyceraldehyde 3-phosphate + dihydroxyacetone phosphate. It participates in carbohydrate metabolism; D-tagatose 6-phosphate degradation; D-glyceraldehyde 3-phosphate and glycerone phosphate from D-tagatose 6-phosphate: step 2/2. This chain is Tagatose 1,6-diphosphate aldolase, found in Listeria monocytogenes serovar 1/2a (strain ATCC BAA-679 / EGD-e).